Consider the following 162-residue polypeptide: Large ribosomal subunit protein bL17 (162 aa).

The segment covering 125 to 140 has biased composition (basic and acidic residues); it reads AAKEAPAKEVAEEKAA. A disordered region spans residues 125–162; that stretch reads AAKEAPAKEVAEEKAAKPAKKAAPKKAEKEEAEDAAEA.

This sequence belongs to the bacterial ribosomal protein bL17 family. In terms of assembly, part of the 50S ribosomal subunit. Contacts protein L32.

The sequence is that of Large ribosomal subunit protein bL17 from Oleidesulfovibrio alaskensis (strain ATCC BAA-1058 / DSM 17464 / G20) (Desulfovibrio alaskensis).